Consider the following 398-residue polypeptide: Calcium-binding and coiled-coil domain-containing protein 2 (398 aa).

The short motif at 133–136 (ILVV) is the CLIR element. Residues 137–301 (TTQGEVEEIE…RENSRLLSYM (165 aa)) adopt a coiled-coil conformation. Positions 203–206 (DYWE) match the LIR-like motif. A disordered region spans residues 314 to 341 (TSDEGGAGQNPGLVYGNPYSGIQESSSP). Residues 323 to 333 (NPGLVYGNPYS) are interaction with LGALS8. The interaction with MYO6 stretch occupies residues 347–398 (KKCPICKADDICDHTLEQQQMQALCLNCPICDKIFPATEKQIFEDHVFCHSL). The UBZ1-type zinc-finger motif lies at 371 to 396 (CLNCPICDKIFPATEKQIFEDHVFCH). Zn(2+) is bound by residues Cys-374, Cys-377, His-392, and His-396. Position 397 is a phosphoserine (Ser-397).

The protein belongs to the CALCOCO family. As to quaternary structure, dimer. Part of a complex consisting of CALCOCO2, TAX1BP1 and MYO6. Interacts with MYO6. Interacts with GEMIN4. Interacts with ATG8 family members MAP1LC3A, MAP1LC3B, GABARAP, GABARAPL1 and GABARAPL2. Interacts with ATG8 family member MAP1LC3C. Interacts with LGALS8. Interacts with TOM1; the interaction is indirect and is mediated by MYO6, which acts as a bridge between TOM1 and CALCOCO2. Interacts with AZI2.

The protein localises to the cytoplasm. It is found in the perinuclear region. The protein resides in the cytoskeleton. It localises to the cytoplasmic vesicle. Its subcellular location is the autophagosome membrane. In terms of biological role, xenophagy-specific receptor required for autophagy-mediated intracellular bacteria degradation. Acts as an effector protein of galectin-sensed membrane damage that restricts the proliferation of infecting pathogens upon entry into the cytosol by targeting LGALS8-associated bacteria for autophagy. Initially orchestrates bacteria targeting to autophagosomes and subsequently ensures pathogen degradation by regulating pathogen-containing autophagosome maturation. Bacteria targeting to autophagosomes relies on its interaction with MAP1LC3A, MAP1LC3B and/or GABARAPL2, whereas regulation of pathogen-containing autophagosome maturation requires the interaction with MAP3LC3C. May play a role in ruffle formation and actin cytoskeleton organization and seems to negatively regulate constitutive secretion. The polypeptide is Calcium-binding and coiled-coil domain-containing protein 2 (Macaca fascicularis (Crab-eating macaque)).